A 218-amino-acid polypeptide reads, in one-letter code: Protein Syd (218 aa).

This sequence belongs to the Syd family.

It localises to the cell inner membrane. Interacts with the SecY protein in vivo. May bind preferentially to an uncomplexed state of SecY, thus functioning either as a chelating agent for excess SecY in the cell or as a regulatory factor that negatively controls the translocase function. The polypeptide is Protein Syd (Shewanella denitrificans (strain OS217 / ATCC BAA-1090 / DSM 15013)).